Here is a 553-residue protein sequence, read N- to C-terminus: Adenine deaminase 1 (553 aa).

This sequence belongs to the metallo-dependent hydrolases superfamily. Adenine deaminase family. It depends on Mn(2+) as a cofactor.

The enzyme catalyses adenine + H2O + H(+) = hypoxanthine + NH4(+). This is Adenine deaminase 1 from Oenococcus oeni (strain ATCC BAA-331 / PSU-1).